A 182-amino-acid polypeptide reads, in one-letter code: Ribosome-recycling factor (182 aa).

The protein belongs to the RRF family.

The protein resides in the cytoplasm. Responsible for the release of ribosomes from messenger RNA at the termination of protein biosynthesis. May increase the efficiency of translation by recycling ribosomes from one round of translation to another. This is Ribosome-recycling factor from Prochlorococcus marinus (strain MIT 9312).